The chain runs to 826 residues: Homeobox-leucine zipper protein HDG5 (826 aa).

Disordered regions lie at residues 1-34 and 69-119; these read MLTMGEGNVMTSNNRFASPPQQPSSSSPGTIQNP and EMME…HRHT. Residues 23-34 are compositionally biased toward low complexity; sequence PSSSSPGTIQNP. The segment covering 88–105 has biased composition (basic and acidic residues); the sequence is EDPKFGNESDVNELHDDE. A compositionally biased stretch (basic residues) spans 110–119; that stretch reads AKKKRYHRHT. Positions 111–170 form a DNA-binding region, homeobox; sequence KKKRYHRHTNRQIQEMEALFKENPHPDDKQRKRLSAELGLKPRQVKFWFQNRRTQMKAQQ. A coiled-coil region spans residues 165 to 189; sequence QMKAQQDRNENVMLRAENDNLKSEN. Positions 314–558 constitute an START domain; the sequence is ADEEKVIAME…LQRQCERIAS (245 aa).

The protein belongs to the HD-ZIP homeobox family. Class IV subfamily. In terms of tissue distribution, expressed in shoot apical meristem (SAM) with higher levels in L1 cells and the epidermal layer of young leaves. Expressed in the L1 of apical inflorescence meristems, early flower primordia, carpel and stamen filament epidermis, ovule primordia, nucellus and chalaze.

The protein resides in the nucleus. In terms of biological role, probable transcription factor. Involved, together with PDF2, in the regulation of flower organs development by promoting the expression of APETALA 3 (AP3) in the epidermis and internal cell layers of developing flowers. The sequence is that of Homeobox-leucine zipper protein HDG5 from Arabidopsis thaliana (Mouse-ear cress).